Consider the following 222-residue polypeptide: Probable transaldolase (222 aa).

K91 functions as the Schiff-base intermediate with substrate in the catalytic mechanism.

The protein belongs to the transaldolase family. Type 3B subfamily.

It localises to the cytoplasm. It catalyses the reaction D-sedoheptulose 7-phosphate + D-glyceraldehyde 3-phosphate = D-erythrose 4-phosphate + beta-D-fructose 6-phosphate. Its pathway is carbohydrate degradation; pentose phosphate pathway; D-glyceraldehyde 3-phosphate and beta-D-fructose 6-phosphate from D-ribose 5-phosphate and D-xylulose 5-phosphate (non-oxidative stage): step 2/3. Functionally, transaldolase is important for the balance of metabolites in the pentose-phosphate pathway. In Pelodictyon phaeoclathratiforme (strain DSM 5477 / BU-1), this protein is Probable transaldolase.